The chain runs to 241 residues: NADPH-dependent FMN reductase ArsH (241 aa).

An FMN-binding site is contributed by 43–50 (SLRTVSYS).

This sequence belongs to the ArsH family. Homotetramer. FMN is required as a cofactor.

Its function is as follows. Has NADPH-dependent FMN reductase activity. No activity with NADH. May play a role in resistance to heavy metal toxicity. This Rhizobium meliloti (strain 1021) (Ensifer meliloti) protein is NADPH-dependent FMN reductase ArsH.